A 662-amino-acid polypeptide reads, in one-letter code: Histidine decarboxylase (662 aa).

Tyr81 and His194 together coordinate substrate. An N6-(pyridoxal phosphate)lysine modification is found at Lys305.

It belongs to the group II decarboxylase family. Homodimer. Requires pyridoxal 5'-phosphate as cofactor.

It catalyses the reaction L-histidine + H(+) = histamine + CO2. Its pathway is amine and polyamine biosynthesis; histamine biosynthesis; histamine from L-histidine: step 1/1. Its function is as follows. Catalyzes the biosynthesis of histamine from histidine. This Homo sapiens (Human) protein is Histidine decarboxylase (HDC).